Reading from the N-terminus, the 133-residue chain is Type III secretion protein HrcQb (133 aa).

The span at 1–21 shows a compositional bias: acidic residues; the sequence is MSTEDLYQDDVEMLDDYEEPV. Positions 1 to 60 are disordered; it reads MSTEDLYQDDVEMLDDYEEPVPEQADQQQRDDEYAEHAFGYADSDAEHEEQSGDHHESPM. Residues 49-59 show a composition bias toward basic and acidic residues; it reads EEQSGDHHESP.

Belongs to the FliN/MopA/SpaO family. Homotetramer. The four monomers assemble into two tightly bound homodimers. Interacts with HrcQa.

The protein resides in the cytoplasm. Its function is as follows. Component of the type III secretion system, which is required for effector protein delivery, parasitism, and pathogenicity. Probably participates in the formation of a C-ring-like assembly along with HrcQa. The chain is Type III secretion protein HrcQb (hrcQb) from Pseudomonas syringae pv. syringae.